A 776-amino-acid chain; its full sequence is Venom dipeptidyl peptidase 4 (776 aa).

A signal peptide spans 1–25 (MVPLRSFVLLNSLFLVLLAARTVVT). 3 N-linked (GlcNAc...) asparagine glycosylation sites follow: Asn-44, Asn-66, and Asn-329. Intrachain disulfides connect Cys-449–Cys-452 and Cys-462–Cys-480. Asn-504 and Asn-577 each carry an N-linked (GlcNAc...) asparagine glycan. The Charge relay system role is filled by Ser-638. The cysteines at positions 658 and 769 are disulfide-linked. 2 N-linked (GlcNAc...) asparagine glycosylation sites follow: Asn-688 and Asn-693. Residues Asp-717 and His-749 each act as charge relay system in the active site.

It belongs to the peptidase S9B family. DPPIV subfamily. Expressed by the venom gland.

The protein resides in the secreted. The enzyme catalyses Release of an N-terminal dipeptide, Xaa-Yaa-|-Zaa-, from a polypeptide, preferentially when Yaa is Pro, provided Zaa is neither Pro nor hydroxyproline.. Its activity is regulated as follows. Inhibited by diprotin A. Venom dipeptidyl-peptidase which removes N-terminal dipeptides sequentially from polypeptides having unsubstituted N-termini provided that the penultimate residue is proline. May process venom proteins into their active forms and/or modulate the chemotactic activity of immune cells after the insect sting. The protein is Venom dipeptidyl peptidase 4 of Vespula vulgaris (Yellow jacket).